The sequence spans 1955 residues: Callose synthase 3 (1955 aa).

Over 1–488 (MSATRGGPDQ…FWHVFRSFDR (488 aa)) the chain is Cytoplasmic. A helical transmembrane segment spans residues 489 to 509 (MWSFYILCLQAMIIMAWDGGQ). At 510-521 (PSSVFGADVFKK) the chain is on the extracellular side. Residues 522-542 (VLSVFITAAIMKLGQAVLDVI) form a helical membrane-spanning segment. Residues 543 to 558 (LNFKAHQSMTLHVKLR) are Cytoplasmic-facing. Residues 559-579 (YILKVFSAAAWVIILPVTYAY) form a helical membrane-spanning segment. The Extracellular segment spans residues 580 to 604 (SWKDPPAFARTIKSWFGSAMHSPSL). Residues 605 to 625 (FIIAVVSYLSPNMLAGVMFLF) form a helical membrane-spanning segment. Topologically, residues 626–660 (PLLRRFLERSNYRIVMLMMWWSQPRLYVGRGMHES) are cytoplasmic. A helical membrane pass occupies residues 661–681 (AFSLFKYTMFWVLLIATKLAF). The Extracellular segment spans residues 682 to 717 (SYYIEIRPLVAPTQAIMKARVTNFQWHEFFPRAKNN). Residues 718 to 738 (IGVVIALWAPIILVYFMDSQI) traverse the membrane as a helical segment. The Cytoplasmic segment spans residues 739–1517 (WYAIFSTLFG…FDFFRMMSCY (779 aa)). A helical transmembrane segment spans residues 1518 to 1538 (FTTVGFYFSTLITVLTVYIFL). The Extracellular segment spans residues 1539–1566 (YGRLYLVLSGLEQGLSTQKGIRDNTPLQ). A helical transmembrane segment spans residues 1567–1587 (IALASQSFVQIGFLMALPMLM). Topologically, residues 1588–1597 (EIGLERGFRT) are cytoplasmic. Residues 1598 to 1618 (ALSEFVLMQLQLAPVFFTFSL) traverse the membrane as a helical segment. Residues 1619 to 1661 (GTKTHYYGRTLLHGGAKYRSTGRGFVVFHAKFADNYRLYSRSH) lie on the Extracellular side of the membrane. The helical transmembrane segment at 1662-1682 (FVKGLEMMLLLVVYQIFGSAY) threads the bilayer. Residues 1683–1688 (RGVLAY) are Cytoplasmic-facing. The helical transmembrane segment at 1689–1709 (LLITISMWFMVGTWLFAPFLF) threads the bilayer. At 1710-1761 (NPSGFEWQKIVDDWTDWNKWINNIGGIGVPAEKSWESWWEEEQEHLRYSGKR) the chain is on the extracellular side. Residues 1762–1782 (GIVVEILLALRFFIYQYGLVY) traverse the membrane as a helical segment. Residues 1783–1792 (HLTITEKTKN) are Cytoplasmic-facing. Residues 1793 to 1813 (FLVYGVSWLVIFLILFVMKTV) traverse the membrane as a helical segment. The Extracellular segment spans residues 1814–1833 (SVGRRRFSASFQLMFRLIKG). The helical transmembrane segment at 1834–1854 (LIFMTFIAIIVILITLAHMTI) threads the bilayer. Over 1855–1856 (QD) the chain is Cytoplasmic. Residues 1857–1877 (IIVCILAFMPTGWGMLLIAQA) traverse the membrane as a helical segment. Over 1878–1899 (CKPVVHRAGFWGSVRTLARGYE) the chain is Extracellular. Residues 1900 to 1920 (IVMGLLLFTPVAFLAWFPFVS) form a helical membrane-spanning segment. Residues 1921 to 1955 (EFQTRMLFNQAFSRGLQISRILGGHRKDRSSRNKE) are Cytoplasmic-facing.

The protein belongs to the glycosyltransferase 48 family.

It localises to the cell membrane. It carries out the reaction [(1-&gt;3)-beta-D-glucosyl](n) + UDP-alpha-D-glucose = [(1-&gt;3)-beta-D-glucosyl](n+1) + UDP + H(+). Its function is as follows. Involved in callose synthesis at the forming cell plate during cytokinesis. During plant growth and development, callose is found as a transitory component of the cell plate in dividing cells, is a major component of pollen mother cell walls and pollen tubes, and is found as a structural component of plasmodesmatal canals. This Arabidopsis thaliana (Mouse-ear cress) protein is Callose synthase 3 (CALS3).